We begin with the raw amino-acid sequence, 162 residues long: Phospholipase A2 (162 aa).

The first 22 residues, 1–22, serve as a signal peptide directing secretion; the sequence is MKVLQMFFCVILLCVTSVLVEA. A propeptide spanning residues 23–35 is cleaved from the precursor; that stretch reads KSTTKGDETASKR. 6 cysteine pairs are disulfide-bonded: cysteine 60/cysteine 155, cysteine 62/cysteine 78, cysteine 77/cysteine 134, cysteine 84/cysteine 127, cysteine 94/cysteine 120, and cysteine 113/cysteine 125. Ca(2+) contacts are provided by tyrosine 61, glycine 63, and glycine 65. The active site involves histidine 81. Aspartate 82 contributes to the Ca(2+) binding site. Aspartate 128 is an active-site residue.

The protein belongs to the phospholipase A2 family. Group I subfamily. D49 sub-subfamily. Requires Ca(2+) as cofactor. In terms of tissue distribution, expressed both outside and in acontia, a specialised envenomation structure laden with batteries of venom-containing nematocysts found only in the superfamily Metridioidea.

The protein resides in the secreted. The protein localises to the nematocyst. The enzyme catalyses a 1,2-diacyl-sn-glycero-3-phosphocholine + H2O = a 1-acyl-sn-glycero-3-phosphocholine + a fatty acid + H(+). PLA2 catalyzes the calcium-dependent hydrolysis of the 2-acyl groups in 3-sn-phosphoglycerides. This Calliactis polypus (Hermit crab anemone) protein is Phospholipase A2.